Reading from the N-terminus, the 238-residue chain is Uridylate kinase (238 aa).

Position 12–15 (12–15 (KLSG)) interacts with ATP. The segment at 20 to 25 (GEKGFG) is involved in allosteric activation by GTP. G54 contacts UMP. ATP is bound by residues G55 and R59. UMP-binding positions include D74 and 135 to 142 (TGSPYFST). 3 residues coordinate ATP: N163, Y169, and D172.

It belongs to the UMP kinase family. In terms of assembly, homohexamer.

It localises to the cytoplasm. The enzyme catalyses UMP + ATP = UDP + ADP. Its pathway is pyrimidine metabolism; CTP biosynthesis via de novo pathway; UDP from UMP (UMPK route): step 1/1. Its activity is regulated as follows. Allosterically activated by GTP. Inhibited by UTP. Functionally, catalyzes the reversible phosphorylation of UMP to UDP. The sequence is that of Uridylate kinase from Lactococcus lactis subsp. lactis (strain IL1403) (Streptococcus lactis).